The primary structure comprises 234 residues: Peptidase E (234 aa).

Catalysis depends on charge relay system residues Ser-123, Asp-138, and His-160.

Belongs to the peptidase S51 family.

It localises to the cytoplasm. The enzyme catalyses Dipeptidase E catalyzes the hydrolysis of dipeptides Asp-|-Xaa. It does not act on peptides with N-terminal Glu, Asn or Gln, nor does it cleave isoaspartyl peptides.. In terms of biological role, hydrolyzes dipeptides containing N-terminal aspartate residues. May play a role in allowing the cell to use peptide aspartate to spare carbon otherwise required for the synthesis of the aspartate family of amino acids. This is Peptidase E from Actinobacillus pleuropneumoniae serotype 3 (strain JL03).